The chain runs to 336 residues: Ketol-acid reductoisomerase (NADP(+)) (336 aa).

Residues 1 to 182 (MAVIYYDKDA…GVTRAGVIET (182 aa)) enclose the KARI N-terminal Rossmann domain. NADP(+) contacts are provided by residues 25 to 28 (YGSQ), R48, S51, S53, and 83 to 86 (DEHQ). Residue H108 is part of the active site. G134 is an NADP(+) binding site. In terms of domain architecture, KARI C-terminal knotted spans 183–328 (TFKEETETDL…KELRKMMPWL (146 aa)). The Mg(2+) site is built by D191, E195, E227, and E231. S252 lines the substrate pocket.

It belongs to the ketol-acid reductoisomerase family. It depends on Mg(2+) as a cofactor.

It carries out the reaction (2R)-2,3-dihydroxy-3-methylbutanoate + NADP(+) = (2S)-2-acetolactate + NADPH + H(+). The catalysed reaction is (2R,3R)-2,3-dihydroxy-3-methylpentanoate + NADP(+) = (S)-2-ethyl-2-hydroxy-3-oxobutanoate + NADPH + H(+). It participates in amino-acid biosynthesis; L-isoleucine biosynthesis; L-isoleucine from 2-oxobutanoate: step 2/4. The protein operates within amino-acid biosynthesis; L-valine biosynthesis; L-valine from pyruvate: step 2/4. In terms of biological role, involved in the biosynthesis of branched-chain amino acids (BCAA). Catalyzes an alkyl-migration followed by a ketol-acid reduction of (S)-2-acetolactate (S2AL) to yield (R)-2,3-dihydroxy-isovalerate. In the isomerase reaction, S2AL is rearranged via a Mg-dependent methyl migration to produce 3-hydroxy-3-methyl-2-ketobutyrate (HMKB). In the reductase reaction, this 2-ketoacid undergoes a metal-dependent reduction by NADPH to yield (R)-2,3-dihydroxy-isovalerate. In Thermotoga maritima (strain ATCC 43589 / DSM 3109 / JCM 10099 / NBRC 100826 / MSB8), this protein is Ketol-acid reductoisomerase (NADP(+)).